The following is a 692-amino-acid chain: Protein adenylyltransferase SelO-1, mitochondrial (692 aa).

The N-terminal 24 residues, 1–24 (MASVGSRLTRFYISRPGVIARRFL), are a transit peptide targeting the mitochondrion. ATP contacts are provided by glycine 142, glycine 144, lysine 176, aspartate 188, glycine 189, arginine 246, and arginine 253. Aspartate 337 acts as the Proton acceptor in catalysis. Residues asparagine 338 and aspartate 347 each coordinate Mg(2+). Position 347 (aspartate 347) interacts with ATP. Residues 637–676 (LEQPGWMGRGGAAIPGERDETEEEGSNSSGAGARGLVPYD) are disordered. Position 690 (selenocysteine 690) is a non-standard amino acid, selenocysteine.

Belongs to the SELO family. Mg(2+) is required as a cofactor.

The protein localises to the mitochondrion. The catalysed reaction is L-tyrosyl-[protein] + ATP = O-(5'-adenylyl)-L-tyrosyl-[protein] + diphosphate. It carries out the reaction L-threonyl-[protein] + ATP = 3-O-(5'-adenylyl)-L-threonyl-[protein] + diphosphate. The enzyme catalyses L-seryl-[protein] + ATP = 3-O-(5'-adenylyl)-L-seryl-[protein] + diphosphate. Its function is as follows. Catalyzes the transfer of adenosine 5'-monophosphate (AMP) to Ser, Thr and Tyr residues of target proteins (AMPylation). May be a redox-active mitochondrial selenoprotein which interacts with a redox target protein. This chain is Protein adenylyltransferase SelO-1, mitochondrial, found in Danio rerio (Zebrafish).